Here is a 1028-residue protein sequence, read N- to C-terminus: Contactin-6 (1028 aa).

Positions 1–19 (MRLLWKLVILLPLINSCAG) are cleaved as a signal peptide. Ig-like C2-type domains follow at residues 32–117 (PQDV…AKLQ), 122–208 (EDFE…RSVQ), 227–308 (PKIE…RNLA), 318–402 (PEWE…AELR), 408–502 (PDFS…RTII), and 500–587 (TIIT…ERLS). Cystine bridges form between cysteine 50/cysteine 100, cysteine 144/cysteine 196, cysteine 249/cysteine 297, cysteine 339/cysteine 386, cysteine 431/cysteine 479, and cysteine 521/cysteine 577. N-linked (GlcNAc...) asparagine glycosylation is found at asparagine 65 and asparagine 193. 3 N-linked (GlcNAc...) asparagine glycosylation sites follow: asparagine 368, asparagine 377, and asparagine 468. 4 Fibronectin type-III domains span residues 600 to 698 (PPED…TKAS), 703 to 800 (APGN…SGED), 805 to 901 (APRG…TKKS), and 902 to 996 (PPSQ…KMSS). 4 N-linked (GlcNAc...) asparagine glycosylation sites follow: asparagine 659, asparagine 765, asparagine 860, and asparagine 865. Phosphotyrosine is present on tyrosine 882. N-linked (GlcNAc...) asparagine glycosylation is found at asparagine 895, asparagine 931, asparagine 956, and asparagine 957. Residue serine 999 is the site of GPI-anchor amidated serine attachment. Positions 1000 to 1028 (TGVQISKPSTQSLSMVGVFYCFAIHPLSR) are cleaved as a propeptide — removed in mature form.

This sequence belongs to the immunoglobulin superfamily. Contactin family. As to quaternary structure, interacts with PTPRG. In terms of tissue distribution, expressed in brain. In brain, it is preferentially expressed in the accessory olfactory bulb, layers II/III and V of the cerebral cortex, piriform cortex, anterior thalamic nuclei, locus coeruleus of the pons and mesencephalic trigeminal nucleus and in Purkinje cells of the cerebellum.

Its subcellular location is the cell membrane. Functionally, contactins mediate cell surface interactions during nervous system development. Participates in oligodendrocytes generation by acting as a ligand of NOTCH1. Its association with NOTCH1 promotes NOTCH1 activation through the released notch intracellular domain (NICD) and subsequent translocation to the nucleus. Involved in motor coordination. The sequence is that of Contactin-6 (Cntn6) from Mus musculus (Mouse).